Consider the following 288-residue polypeptide: 4-hydroxybenzoate octaprenyltransferase (288 aa).

A run of 6 helical transmembrane segments spans residues 20-40, 43-63, 96-116, 210-230, 234-254, and 262-282; these read IGTLLLLWPCLMALTFAAGGL, LKVFIIFVIGVFSMRACGCII, LFVVMALFSFGLVLMLNPLVV, QIIGLFQLAALSCFIIAGMVA, AIYAVGILAFIGFGLYQQKLI, and CFTAFLNNNWAGMVLFTALML.

It belongs to the UbiA prenyltransferase family. The cofactor is Mg(2+).

It is found in the cell inner membrane. The catalysed reaction is all-trans-octaprenyl diphosphate + 4-hydroxybenzoate = 4-hydroxy-3-(all-trans-octaprenyl)benzoate + diphosphate. Its pathway is cofactor biosynthesis; ubiquinone biosynthesis. Catalyzes the prenylation of para-hydroxybenzoate (PHB) with an all-trans polyprenyl group. Mediates the second step in the final reaction sequence of ubiquinone-8 (UQ-8) biosynthesis, which is the condensation of the polyisoprenoid side chain with PHB, generating the first membrane-bound Q intermediate 3-octaprenyl-4-hydroxybenzoate. The sequence is that of 4-hydroxybenzoate octaprenyltransferase from Shewanella pealeana (strain ATCC 700345 / ANG-SQ1).